The chain runs to 1793 residues: Non-reducing polyketide synthase adaA (1793 aa).

The interval 16–250 (NDDLKALFRG…YSKSLALPVY (235 aa)) is N-terminal acylcarrier protein transacylase domain (SAT). One can recognise a Ketosynthase family 3 (KS3) domain in the interval 388–821 (DSKLAIVGMA…GGNTTLVLED (434 aa)). Residues Cys-561, His-696, and His-739 each act as for beta-ketoacyl synthase activity in the active site. The segment at 923-1245 (VFTFTGQGAY…KSLCTLHLAG (323 aa)) is malonyl-CoA:ACP transacylase (MAT) domain. Residues 1312-1634 (TSLIHQVTEE…RLLMDRFFSP (323 aa)) are product template (PT) domain. Positions 1316-1452 (HQVTEETVDK…GSIKYPADPT (137 aa)) are N-terminal hotdog fold. The PKS/mFAS DH domain occupies 1316-1629 (HQVTEETVDK…FRRVPRLLMD (314 aa)). His-1348 acts as the Proton acceptor; for dehydratase activity in catalysis. Positions 1482–1629 (KASTLSKPLA…FRRVPRLLMD (148 aa)) are C-terminal hotdog fold. Asp-1540 functions as the Proton donor; for dehydratase activity in the catalytic mechanism. Residues 1642–1659 (AAPAPAPAAVPAVKKQPP) are compositionally biased toward low complexity. Residues 1642 to 1714 (AAPAPAPAAV…TTEQEAPVAD (73 aa)) form a disordered region. The segment covering 1660 to 1681 (TETIQPQAPKTEQKQDQLQLPN) has biased composition (polar residues). The span at 1683 to 1706 (ASAAPSTANSSSSPSSSGVATPTT) shows a compositional bias: low complexity. Positions 1716-1793 (SAVTGVAGKC…DLTGWLEQYC (78 aa)) constitute a Carrier domain. The residue at position 1753 (Ser-1753) is an O-(pantetheine 4'-phosphoryl)serine.

Pantetheine 4'-phosphate serves as cofactor.

The enzyme catalyses holo-[ACP] + 9 malonyl-CoA + acetyl-CoA + 9 H(+) = 3-(2,4-dioxopentyl)-3,6,8,9-tetrahydroxy-1-oxo-1,2,3,4-tetrahydroanthracene-2-carboxyl-[ACP] + 9 CO2 + 10 CoA + 2 H2O. It functions in the pathway secondary metabolite biosynthesis. Functionally, non-reducing polyketide synthase; part of the gene cluster that mediates the biosynthesis of the linear tetracyclic TAN-1612 neuropeptide Y receptor antagonist. The decaketide backbone of TAN-1612 is synthesized by the non-reducing polyketide synthase adaA via condensation of one acetyl-CoA starter unit with 9 malonyl-CoA units. The FAD-dependent monooxygenase adaC then performs hydroxylation at C2 while the polaketide chain is still attached to the NRPKS adaA. The alpha-hydroxylation step at C2 appears to be crucial for the following C18-C1 Claisen cyclization and release of the C9-hydroxyl version of TAN-1612 from the NRPKS adaA, two steps performed by the lactamase-like protein adaB. Finally, the O-methyltransferase adaD performs the C9 O-methylation to complete the biosynthesis of TAN-1612. In Aspergillus niger (strain ATCC MYA-4892 / CBS 513.88 / FGSC A1513), this protein is Non-reducing polyketide synthase adaA.